A 273-amino-acid chain; its full sequence is Putative phosphoenolpyruvate synthase regulatory protein (273 aa).

ADP is bound at residue 153-160; the sequence is GVSRSGKT.

This sequence belongs to the pyruvate, phosphate/water dikinase regulatory protein family. PSRP subfamily.

The catalysed reaction is [pyruvate, water dikinase] + ADP = [pyruvate, water dikinase]-phosphate + AMP + H(+). The enzyme catalyses [pyruvate, water dikinase]-phosphate + phosphate + H(+) = [pyruvate, water dikinase] + diphosphate. In terms of biological role, bifunctional serine/threonine kinase and phosphorylase involved in the regulation of the phosphoenolpyruvate synthase (PEPS) by catalyzing its phosphorylation/dephosphorylation. The protein is Putative phosphoenolpyruvate synthase regulatory protein of Albidiferax ferrireducens (strain ATCC BAA-621 / DSM 15236 / T118) (Rhodoferax ferrireducens).